Here is a 567-residue protein sequence, read N- to C-terminus: Type II secretion system protein E (567 aa).

325–332 (GPTGSGKT) is an ATP binding site.

Belongs to the GSP E family. Forms homooligomers; most probably hexamers. Interacts with XpsL/GspL.

It localises to the cell inner membrane. It catalyses the reaction ATP + H2O + cellular proteinSide 1 = ADP + phosphate + cellular proteinSide 2.. In terms of biological role, ATPase component of the type II secretion system required for the energy-dependent secretion of extracellular factors such as proteases and toxins from the periplasm. Acts as a molecular motor to provide the energy that is required for assembly of the pseudopilus and the extrusion of substrates generated in the cytoplasm. The chain is Type II secretion system protein E (xpsE) from Xanthomonas campestris pv. campestris (strain ATCC 33913 / DSM 3586 / NCPPB 528 / LMG 568 / P 25).